Reading from the N-terminus, the 197-residue chain is Thymidylate kinase (197 aa).

7–14 (GIDGCGKS) contributes to the ATP binding site.

This sequence belongs to the thymidylate kinase family.

It carries out the reaction dTMP + ATP = dTDP + ADP. In terms of biological role, phosphorylation of dTMP to form dTDP in both de novo and salvage pathways of dTTP synthesis. The protein is Thymidylate kinase of Fervidobacterium nodosum (strain ATCC 35602 / DSM 5306 / Rt17-B1).